The sequence spans 132 residues: Fatty acid-binding protein 12 (132 aa).

A fatty acid is bound by residues R107 and 127–129; that span reads RTY.

This sequence belongs to the calycin superfamily. Fatty-acid binding protein (FABP) family. As to expression, highly expressed in adult retina and testis with lower levels in cerebral cortex, kidney and epididymis. In the retina, strongly expressed in the ganglion cell layer and throughout the inner nuclear layer in amacrine and bipolar cells. Not expressed in the outer nuclear layer. In the testis, detected in the seminiferous tubules.

Its function is as follows. May play a role in lipid transport. The sequence is that of Fatty acid-binding protein 12 from Rattus norvegicus (Rat).